Consider the following 496-residue polypeptide: Glutamate--tRNA ligase 2 (496 aa).

The 'HIGH' region motif lies at 13–23 (PSPTGRLHVGG). A 'KMSKS' region motif is present at residues 255 to 259 (KLSKR). An ATP-binding site is contributed by Lys258.

It belongs to the class-I aminoacyl-tRNA synthetase family. Glutamate--tRNA ligase type 1 subfamily. Monomer.

The protein localises to the cytoplasm. The catalysed reaction is tRNA(Glu) + L-glutamate + ATP = L-glutamyl-tRNA(Glu) + AMP + diphosphate. In terms of biological role, catalyzes the attachment of glutamate to tRNA(Glu) in a two-step reaction: glutamate is first activated by ATP to form Glu-AMP and then transferred to the acceptor end of tRNA(Glu). This is Glutamate--tRNA ligase 2 from Rubrobacter xylanophilus (strain DSM 9941 / JCM 11954 / NBRC 16129 / PRD-1).